Consider the following 544-residue polypeptide: Protein angel homolog 2 (544 aa).

It belongs to the CCR4/nocturin family.

This Bos taurus (Bovine) protein is Protein angel homolog 2 (ANGEL2).